An 835-amino-acid polypeptide reads, in one-letter code: MSRSPDKLALPPPPPPPPSRTVVVALSGSSKSKYVVTWAIEKFATEGNVGFKLLHIHPMITSVPTPMGNAIPISEVRDDVVTAYRQEILWQSEEMLKPYTKLFVRRKVAVEVLVIESDNVAAAIAEEVTRDSIDRIVIGGSSRSFFSRKADICSVISALMPNFCTVYVVSKGKLSCVRPSDSDGNATIREDGSERTNSSSGSSGPTSDSSDVMSSAHDSQSRPLSLPVRRMQHFPAIAGQASVPMETSSVGSDETRCMSLDAEEARDVSSINRSSTDTTSRWTPRRRDYEERKEAMSSSSSNREYGNFGTRFSWSGMGVDTTHSRASQQASNMSDALSEQSYTDNQVNLNFEVEKLRAELRHVQEMYAVAQTETFDASRKLGELNQRRLEEAIKLEELKLKEYEARELAEKEKQNFEKARRDAESMRERAEREIAQRREAERKSARDTKEKEKLEGTLGSPQLQYQHFAWEEIMAATSSFSEELKIGMGAYGAVYKCNLHHTTAVVKVLQSAENQLSKQFQQELEILSKIRHPHLVLLLGACPEQGALVYEYMENGSLEDRLFQVNNSPPLPWFERFRIAWEVAAALVFLHKSKPKPIIHRDLKPANILLDHNFVSKVGDVGLSTMVQVDPLSTKFTIYKQTSPVGTLCYIDPEYQRTGRISSKSDIYSFGMILLQLLTAKPAIALTHFVESAMDSNDEFLKILDQKAGNWPIEETRELAALALCCTELRGKDRPDLKDQILPALENLKKVAEKARNSFSGVSTQPPTHFICPLLKDVMNEPCVAADGYTYDRHAIEEWLKEHNTSPMTDSPLHSKNLLPNYTLYTAIMEWRSTR.

Disordered regions lie at residues 1–22, 177–303, and 410–457; these read MSRS…SRTV, VRPS…SSNR, and EKEK…LEGT. A compositionally biased stretch (pro residues) spans 10–19; the sequence is LPPPPPPPPS. Over residues 195–218 the composition is skewed to low complexity; sequence RTNSSSGSSGPTSDSSDVMSSAHD. Residues 269 to 282 are compositionally biased toward polar residues; sequence SSINRSSTDTTSRW. 2 stretches are compositionally biased toward basic and acidic residues: residues 285 to 295 and 410 to 455; these read RRRDYEERKEA and EKEK…EKLE. The stretch at 340-459 forms a coiled coil; the sequence is QSYTDNQVNL…EKEKLEGTLG (120 aa). Residues 480–745 enclose the Protein kinase domain; sequence FSEELKIGMG…DLKDQILPAL (266 aa). Residues 486-494 and Lys-507 contribute to the ATP site; that span reads IGMGAYGAV. Residue Asp-602 is the Proton acceptor of the active site. The 71-residue stretch at 765–835 folds into the U-box domain; the sequence is QPPTHFICPL…TAIMEWRSTR (71 aa).

It belongs to the protein kinase superfamily. Ser/Thr protein kinase family.

The catalysed reaction is L-seryl-[protein] + ATP = O-phospho-L-seryl-[protein] + ADP + H(+). It carries out the reaction L-threonyl-[protein] + ATP = O-phospho-L-threonyl-[protein] + ADP + H(+). It catalyses the reaction S-ubiquitinyl-[E2 ubiquitin-conjugating enzyme]-L-cysteine + [acceptor protein]-L-lysine = [E2 ubiquitin-conjugating enzyme]-L-cysteine + N(6)-ubiquitinyl-[acceptor protein]-L-lysine.. It functions in the pathway protein modification; protein ubiquitination. Functions as an E3 ubiquitin ligase. This chain is U-box domain-containing protein 35 (PUB35), found in Arabidopsis thaliana (Mouse-ear cress).